Here is a 95-residue protein sequence, read N- to C-terminus: MKFLLLVLAALGFLTQVIPASAGGSKCVSNTPGYCRTCCHWGETALFMCNASRKCCISYSFLPKPDLPQLIGNHWQSRRRNTQRKDKKQQTTVTS.

A signal peptide spans 1–22; that stretch reads MKFLLLVLAALGFLTQVIPASA. Intrachain disulfides connect C27–C55, C35–C49, and C39–C56. A disordered region spans residues 74–95; it reads HWQSRRRNTQRKDKKQQTTVTS. The segment covering 76–87 has biased composition (basic residues); that stretch reads QSRRRNTQRKDK.

This sequence belongs to the beta-defensin family.

It localises to the secreted. Its function is as follows. Has antibacterial activity. The sequence is that of Beta-defensin 132 (DEFB132) from Homo sapiens (Human).